A 290-amino-acid polypeptide reads, in one-letter code: Ribosomal RNA small subunit methyltransferase A (290 aa).

N27, L29, G54, E75, D100, and N125 together coordinate S-adenosyl-L-methionine.

Belongs to the class I-like SAM-binding methyltransferase superfamily. rRNA adenine N(6)-methyltransferase family. RsmA subfamily.

It localises to the cytoplasm. The catalysed reaction is adenosine(1518)/adenosine(1519) in 16S rRNA + 4 S-adenosyl-L-methionine = N(6)-dimethyladenosine(1518)/N(6)-dimethyladenosine(1519) in 16S rRNA + 4 S-adenosyl-L-homocysteine + 4 H(+). In terms of biological role, specifically dimethylates two adjacent adenosines (A1518 and A1519) in the loop of a conserved hairpin near the 3'-end of 16S rRNA in the 30S particle. May play a critical role in biogenesis of 30S subunits. This chain is Ribosomal RNA small subunit methyltransferase A, found in Streptococcus pneumoniae (strain P1031).